The primary structure comprises 127 residues: Apolipoprotein C-IV (127 aa).

An N-terminal signal peptide occupies residues 1-27 (MSLLRNRLQDLPALCLCVLVLACIGAC).

The protein belongs to the apolipoprotein C4 family.

The protein resides in the secreted. Functionally, may participate in lipoprotein metabolism. This Papio anubis (Olive baboon) protein is Apolipoprotein C-IV (APOC4).